The following is a 55-amino-acid chain: uncharacterized protein (55 aa).

Residues 1 to 22 are disordered; the sequence is MPALKSHVRPNSAAPARRQPWP.

This is an uncharacterized protein from Rhodobacter capsulatus (Rhodopseudomonas capsulata).